Here is a 185-residue protein sequence, read N- to C-terminus: Elongation factor P (185 aa).

This sequence belongs to the elongation factor P family.

It localises to the cytoplasm. The protein operates within protein biosynthesis; polypeptide chain elongation. In terms of biological role, involved in peptide bond synthesis. Stimulates efficient translation and peptide-bond synthesis on native or reconstituted 70S ribosomes in vitro. Probably functions indirectly by altering the affinity of the ribosome for aminoacyl-tRNA, thus increasing their reactivity as acceptors for peptidyl transferase. The sequence is that of Elongation factor P from Mesomycoplasma hyopneumoniae (strain 232) (Mycoplasma hyopneumoniae).